Reading from the N-terminus, the 138-residue chain is Transcription antitermination protein NusB (138 aa).

Belongs to the NusB family.

Involved in transcription antitermination. Required for transcription of ribosomal RNA (rRNA) genes. Binds specifically to the boxA antiterminator sequence of the ribosomal RNA (rrn) operons. The protein is Transcription antitermination protein NusB of Tolumonas auensis (strain DSM 9187 / NBRC 110442 / TA 4).